The sequence spans 440 residues: Trigger factor (440 aa).

Positions 163–248 constitute a PPIase FKBP-type domain; that stretch reads GDTVNIDFDG…INEIKYKNVP (86 aa).

This sequence belongs to the FKBP-type PPIase family. Tig subfamily.

It is found in the cytoplasm. The catalysed reaction is [protein]-peptidylproline (omega=180) = [protein]-peptidylproline (omega=0). In terms of biological role, involved in protein export. Acts as a chaperone by maintaining the newly synthesized protein in an open conformation. Functions as a peptidyl-prolyl cis-trans isomerase. The sequence is that of Trigger factor from Staphylococcus carnosus (strain TM300).